The chain runs to 669 residues: MFFIKLFTIFFLSFFWQSLKSSSQIIDFTYNGFRPPPTDISILGIATITPNGLLKLTNTTMQSTGHAFYTKPIRFKDSPNGTVSSFSTTFVFAIHSQIPIAHGMAFVIAPNPRLPFGSPLQYLGLFNVTNNGNVRNHVFAVELDTIMNIEFNDTNNNHVGIDINSLNSVKSSPAGYWDENDQFHNLTLISSKRMQVWVDFDGPTHLIDVTMAPFGEVKPRKPLVSIVRDLSSVLLQDMFVGFSSATGNIVSEIFVLGWSFGVNGEAQPLALSKLPRLPVWDLKPTRVYRFYKNWVPLISLLLIPFLLIIFLVRFIMKRRRKFAEEVEDWETEFGKNRLRFKDLYYATKGFKDKNILGSGGFGSVYKGIMPKTKKEIAVKRVSNESRQGLKEFVAEIVSIGQMSHRNLVPLVGYCRRRDELLLVYDYMPNGSLDKYLYNSPEVTLDWKQRFKVINGVASALFYLHEEWEQVVIHRDVKASNVLLDAELNGRLGDFGLAQLCDHGSDPQTTRVVGTWGYLAPDHIRTGRATTTTDVFAFGVLLLEVACGRRPIEINNQSGERVVLVDWVFRFWMEANILDAKDPNLGSEYDQKEVEMVLKLGLLCSHSDPLARPTMRQVLQYLRGDAMLPDLSPLDLRGSGIMLGTHNGSNESGMFTSGSSVAYSLLSSGR.

The first 23 residues, 1-23 (MFFIKLFTIFFLSFFWQSLKSSS), serve as a signal peptide directing secretion. Over 24 to 294 (QIIDFTYNGF…TRVYRFYKNW (271 aa)) the chain is Extracellular. Positions 26 to 260 (IDFTYNGFRP…SEIFVLGWSF (235 aa)) are legume-lectin like. 5 N-linked (GlcNAc...) asparagine glycosylation sites follow: N58, N80, N127, N152, and N185. The chain crosses the membrane as a helical span at residues 295 to 315 (VPLISLLLIPFLLIIFLVRFI). Residues 316 to 669 (MKRRRKFAEE…VAYSLLSSGR (354 aa)) are Cytoplasmic-facing. Residues 350 to 627 (FKDKNILGSG…LQYLRGDAML (278 aa)) enclose the Protein kinase domain. Residues 356 to 364 (LGSGGFGSV) and K379 each bind ATP. Residue D475 is the Proton acceptor of the active site.

It in the C-terminal section; belongs to the protein kinase superfamily. Ser/Thr protein kinase family. This sequence in the N-terminal section; belongs to the leguminous lectin family.

Its subcellular location is the cell membrane. The enzyme catalyses L-seryl-[protein] + ATP = O-phospho-L-seryl-[protein] + ADP + H(+). It catalyses the reaction L-threonyl-[protein] + ATP = O-phospho-L-threonyl-[protein] + ADP + H(+). Involved in resistance response to the pathogenic oomycetes Phytophthora infestans and Phytophthora capsici and to the pathogenic bacteria Pseudomonas syringae. This Arabidopsis thaliana (Mouse-ear cress) protein is L-type lectin-domain containing receptor kinase IV.4.